The sequence spans 200 residues: Cysteine dioxygenase type 1 (200 aa).

The Fe cation site is built by His86, His88, and His140. The segment at residues Cys93–Tyr157 is a cross-link (3'-(S-cysteinyl)-tyrosine (Cys-Tyr)).

It belongs to the cysteine dioxygenase family. In terms of assembly, monomer. The cofactor is Fe(2+). Ni(2+) is required as a cofactor. It depends on Zn(2+) as a cofactor. Post-translationally, the thioether cross-link between Cys-93 and Tyr-157 plays a structural role through stabilizing the Fe(2+) ion, and prevents the production of highly damaging free hydroxyl radicals by holding the oxygen radical via hydroxyl hydrogen. As to expression, highly expressed in liver and placenta. Low expression in heart, brain and pancreas. Also detected in hepatoblastoma Hep-G2 cells.

The enzyme catalyses L-cysteine + O2 = 3-sulfino-L-alanine + H(+). The protein operates within organosulfur biosynthesis; taurine biosynthesis; hypotaurine from L-cysteine: step 1/2. Functionally, catalyzes the oxidation of cysteine to cysteine sulfinic acid with addition of molecular dioxygen. The polypeptide is Cysteine dioxygenase type 1 (CDO1) (Homo sapiens (Human)).